A 668-amino-acid polypeptide reads, in one-letter code: Fructose-1,6-bisphosphatase class 3 (668 aa).

It belongs to the FBPase class 3 family. The cofactor is Mn(2+).

The catalysed reaction is beta-D-fructose 1,6-bisphosphate + H2O = beta-D-fructose 6-phosphate + phosphate. It functions in the pathway carbohydrate biosynthesis; gluconeogenesis. This is Fructose-1,6-bisphosphatase class 3 from Clostridium botulinum (strain Loch Maree / Type A3).